The primary structure comprises 1191 residues: DNA-directed RNA polymerase subunit beta (1191 aa).

The segment at 1164 to 1191 is disordered; sequence EEEDLQPADALNIAPQPDTEEEPVESFE. Residues 1181–1191 show a composition bias toward acidic residues; sequence DTEEEPVESFE.

The protein belongs to the RNA polymerase beta chain family. In terms of assembly, the RNAP catalytic core consists of 2 alpha, 1 beta, 1 beta' and 1 omega subunit. When a sigma factor is associated with the core the holoenzyme is formed, which can initiate transcription.

It catalyses the reaction RNA(n) + a ribonucleoside 5'-triphosphate = RNA(n+1) + diphosphate. In terms of biological role, DNA-dependent RNA polymerase catalyzes the transcription of DNA into RNA using the four ribonucleoside triphosphates as substrates. The polypeptide is DNA-directed RNA polymerase subunit beta (Lysinibacillus sphaericus (strain C3-41)).